The chain runs to 352 residues: Cyclin-dependent kinase-like 1 (352 aa).

One can recognise a Protein kinase domain in the interval 4-287; the sequence is YEKIGKIGEG…CEQLLQHPYF (284 aa). ATP contacts are provided by residues 10–18 and K33; that span reads IGEGSYGVV. A [NKR]KIAxRE motif is present at residues 45–51; that stretch reads KKIALRE. D126 functions as the Proton acceptor in the catalytic mechanism.

This sequence belongs to the protein kinase superfamily. CMGC Ser/Thr protein kinase family. CDC2/CDKX subfamily.

The protein resides in the cytoplasm. The protein localises to the nucleus. It catalyses the reaction L-seryl-[protein] + ATP = O-phospho-L-seryl-[protein] + ADP + H(+). The enzyme catalyses L-threonyl-[protein] + ATP = O-phospho-L-threonyl-[protein] + ADP + H(+). This chain is Cyclin-dependent kinase-like 1, found in Rattus norvegicus (Rat).